Reading from the N-terminus, the 155-residue chain is 3-hydroxyacyl-[acyl-carrier-protein] dehydratase FabZ (155 aa).

Histidine 58 is a catalytic residue.

This sequence belongs to the thioester dehydratase family. FabZ subfamily.

It localises to the cytoplasm. It catalyses the reaction a (3R)-hydroxyacyl-[ACP] = a (2E)-enoyl-[ACP] + H2O. Involved in unsaturated fatty acids biosynthesis. Catalyzes the dehydration of short chain beta-hydroxyacyl-ACPs and long chain saturated and unsaturated beta-hydroxyacyl-ACPs. The chain is 3-hydroxyacyl-[acyl-carrier-protein] dehydratase FabZ from Rhizobium leguminosarum bv. trifolii (strain WSM2304).